A 396-amino-acid polypeptide reads, in one-letter code: ATP-dependent RNA helicase eIF4A (396 aa).

Residues 1–20 are disordered; it reads MADKGLEDVPEGQIESNYDE. A Q motif motif is present at residues 23 to 51; it reads DSFDAMNLKAELLRGVYAYGFERPSAIQQ. The Helicase ATP-binding domain occupies 54-224; the sequence is IMPVIKGHDV…TKFMRDPVRI (171 aa). 67-74 serves as a coordination point for ATP; it reads AQSGTGKT. Positions 172–175 match the DEAD box motif; sequence DEAD. Positions 235–396 constitute a Helicase C-terminal domain; it reads GIKQFYIAVE…EMPMNVADLI (162 aa).

It belongs to the DEAD box helicase family. eIF4A subfamily. Component of the eIF4F complex, which composition varies with external and internal environmental conditions. It is composed of at least eIF4A, eIF4E and eIF4G.

Its subcellular location is the cytoplasm. It carries out the reaction ATP + H2O = ADP + phosphate + H(+). Its function is as follows. ATP-dependent RNA helicase which is a subunit of the eIF4F complex involved in cap recognition and is required for mRNA binding to ribosome. In the current model of translation initiation, eIF4A unwinds RNA secondary structures in the 5'-UTR of mRNAs which is necessary to allow efficient binding of the small ribosomal subunit, and subsequent scanning for the initiator codon. This chain is ATP-dependent RNA helicase eIF4A (TIF1), found in Phaeosphaeria nodorum (strain SN15 / ATCC MYA-4574 / FGSC 10173) (Glume blotch fungus).